Reading from the N-terminus, the 306-residue chain is tRNA dimethylallyltransferase 1 (306 aa).

13 to 20 (GPTASGKT) is a binding site for ATP. 15–20 (TASGKT) is a binding site for substrate. Residues 38–41 (DSRQ) form an interaction with substrate tRNA region.

The protein belongs to the IPP transferase family. Monomer. Requires Mg(2+) as cofactor.

The catalysed reaction is adenosine(37) in tRNA + dimethylallyl diphosphate = N(6)-dimethylallyladenosine(37) in tRNA + diphosphate. Its function is as follows. Catalyzes the transfer of a dimethylallyl group onto the adenine at position 37 in tRNAs that read codons beginning with uridine, leading to the formation of N6-(dimethylallyl)adenosine (i(6)A). This chain is tRNA dimethylallyltransferase 1, found in Azobacteroides pseudotrichonymphae genomovar. CFP2.